The following is a 266-amino-acid chain: Putative pyruvate, phosphate dikinase regulatory protein (266 aa).

149–156 (GVSRTSKT) provides a ligand contact to ADP.

It belongs to the pyruvate, phosphate/water dikinase regulatory protein family. PDRP subfamily.

The catalysed reaction is N(tele)-phospho-L-histidyl/L-threonyl-[pyruvate, phosphate dikinase] + ADP = N(tele)-phospho-L-histidyl/O-phospho-L-threonyl-[pyruvate, phosphate dikinase] + AMP + H(+). It carries out the reaction N(tele)-phospho-L-histidyl/O-phospho-L-threonyl-[pyruvate, phosphate dikinase] + phosphate + H(+) = N(tele)-phospho-L-histidyl/L-threonyl-[pyruvate, phosphate dikinase] + diphosphate. Bifunctional serine/threonine kinase and phosphorylase involved in the regulation of the pyruvate, phosphate dikinase (PPDK) by catalyzing its phosphorylation/dephosphorylation. The polypeptide is Putative pyruvate, phosphate dikinase regulatory protein (Geobacillus sp. (strain WCH70)).